We begin with the raw amino-acid sequence, 512 residues long: ATP synthase subunit alpha 2 (512 aa).

169–176 serves as a coordination point for ATP; that stretch reads GDRQTGKT.

This sequence belongs to the ATPase alpha/beta chains family. F-type ATPases have 2 components, CF(1) - the catalytic core - and CF(0) - the membrane proton channel. CF(1) has five subunits: alpha(3), beta(3), gamma(1), delta(1), epsilon(1). CF(0) has three main subunits: a(1), b(2) and c(9-12). The alpha and beta chains form an alternating ring which encloses part of the gamma chain. CF(1) is attached to CF(0) by a central stalk formed by the gamma and epsilon chains, while a peripheral stalk is formed by the delta and b chains.

The protein localises to the cell inner membrane. It carries out the reaction ATP + H2O + 4 H(+)(in) = ADP + phosphate + 5 H(+)(out). Functionally, produces ATP from ADP in the presence of a proton gradient across the membrane. The alpha chain is a regulatory subunit. The protein is ATP synthase subunit alpha 2 of Vibrio campbellii (strain ATCC BAA-1116).